Consider the following 516-residue polypeptide: Multicopper oxidase CueO (516 aa).

Residues 1–28 (MQRRDFLKYSVALGVASALPLWSRAVFA) constitute a signal peptide (tat-type signal). 3 Plastocyanin-like domains span residues 55 to 165 (GQST…IEDD), 227 to 292 (PRGW…DNKP), and 399 to 516 (GGKF…GFTV). Cu cation contacts are provided by H101, H103, H141, and H143. H443, H446, H448, H499, C500, H501, and H505 together coordinate Cu cation.

This sequence belongs to the multicopper oxidase family. In terms of assembly, monomer. Cu cation serves as cofactor. In terms of processing, predicted to be exported by the Tat system. The position of the signal peptide cleavage has not been experimentally proven.

It localises to the periplasm. The enzyme catalyses 4 Cu(+) + O2 + 4 H(+) = 4 Cu(2+) + 2 H2O. In terms of biological role, multicopper oxidase involved in copper homeostasis and copper tolerance under aerobic conditions. Is responsible for the oxidation of Cu(+) to the less harmful Cu(2+) in the periplasm, thereby preventing Cu(+) from entering the cytoplasm. This chain is Multicopper oxidase CueO (cueO), found in Escherichia coli O157:H7.